The sequence spans 195 residues: uncharacterized protein (195 aa).

Residues 10–70 (EETVARLLQA…ATAYEVLRRQ (61 aa)) form the HTH tetR-type domain. The H-T-H motif DNA-binding region spans 33–52 (SAAVITKRAGVSVGALFRHF).

This is an uncharacterized protein from Mycobacterium tuberculosis (strain CDC 1551 / Oshkosh).